The chain runs to 293 residues: Tumor necrosis factor receptor type 1-associated DEATH domain protein (293 aa).

The Nuclear export signal signature appears at leucine 156–serine 171. Positions threonine 200 to glutamine 290 constitute a Death domain. The Nuclear localization signal signature appears at lysine 216 to leucine 229.

Heterodimer with tnfrsf1a.

The protein localises to the nucleus. It is found in the cytoplasm. The protein resides in the cytoskeleton. Adapter molecule for tnfrsf1a that specifically associates with the cytoplasmic domain of activated tnfrsf1a mediating its interaction with fadd. The protein is Tumor necrosis factor receptor type 1-associated DEATH domain protein of Danio rerio (Zebrafish).